The following is a 345-amino-acid chain: Telomere-binding protein cav (345 aa).

Positions 115-337 (RRKMVQPYPE…TITFQNTESE (223 aa)) are required for binding to Su(var)205. Disordered stretches follow at residues 145–180 (RLDRWQKKKSQNLSAPESSPDAHASSNDAVQSHEDQ) and 200–231 (PPGVSSSDLSGIGDDEDEQQQSGFQDENINRP). 2 short sequence motifs (su(var)205-binding Pro-containing repeat) span residues 231-237 (PETEINE) and 298-304 (PETEMNE).

Component of the HipHop-HOAP telomere capping complex, composed of at least HipHop and cav/HOAP, and may include Su(var)205/HP1; HipHop and cav/HOAP, but not Su(var)205, are interdependent for their protein stability. Interacts with HipHop (via N-terminus). Interacts (via C-terminus) with Su(var)205/HP1 dimer (via hinge and chromoshadow domain) and Orc1; possibly interacts with other components of the origin recognition complex (ORC). Each molecule of cav/HOAP interacts with 2 molecules of Su(var)205/HP1. The HipHop-HOAP complex recruits the MTV complex, consisting of moi/modigliani, tea and ver/verrocchio, to telomeres, forming the terminin telomere-capping complex. Interacts with moi/modigliani; the interaction is direct. Interacts with ver/verrochio; the interaction is direct. Interacts with HP6, which is also part of the terminin complex. Interacts (via N-terminus) with peo/pendolino (via N-terminus); the interaction is direct.

Its subcellular location is the nucleus. It is found in the chromosome. The protein localises to the telomere. Part of the HipHop-HOAP complex that recruits the MTV complex to form the terminin telomere-capping complex, which binds to chromosome ends in a sequence-independent manner and prevents telomere fusion. Telomere capping is independent of the origin recognition complex (ORC). This is Telomere-binding protein cav from Drosophila melanogaster (Fruit fly).